The sequence spans 92 residues: Small ribosomal subunit protein uS19 (92 aa).

Belongs to the universal ribosomal protein uS19 family.

Protein S19 forms a complex with S13 that binds strongly to the 16S ribosomal RNA. In Wigglesworthia glossinidia brevipalpis, this protein is Small ribosomal subunit protein uS19.